A 136-amino-acid chain; its full sequence is Large ribosomal subunit protein uL16 (136 aa).

Belongs to the universal ribosomal protein uL16 family. In terms of assembly, part of the 50S ribosomal subunit.

In terms of biological role, binds 23S rRNA and is also seen to make contacts with the A and possibly P site tRNAs. The chain is Large ribosomal subunit protein uL16 from Erwinia tasmaniensis (strain DSM 17950 / CFBP 7177 / CIP 109463 / NCPPB 4357 / Et1/99).